We begin with the raw amino-acid sequence, 361 residues long: Histidinol-phosphate aminotransferase (361 aa).

Position 219 is an N6-(pyridoxal phosphate)lysine (lysine 219).

This sequence belongs to the class-II pyridoxal-phosphate-dependent aminotransferase family. Histidinol-phosphate aminotransferase subfamily. As to quaternary structure, homodimer. Requires pyridoxal 5'-phosphate as cofactor.

It carries out the reaction L-histidinol phosphate + 2-oxoglutarate = 3-(imidazol-4-yl)-2-oxopropyl phosphate + L-glutamate. It functions in the pathway amino-acid biosynthesis; L-histidine biosynthesis; L-histidine from 5-phospho-alpha-D-ribose 1-diphosphate: step 7/9. The sequence is that of Histidinol-phosphate aminotransferase from Cereibacter sphaeroides (strain ATCC 17023 / DSM 158 / JCM 6121 / CCUG 31486 / LMG 2827 / NBRC 12203 / NCIMB 8253 / ATH 2.4.1.) (Rhodobacter sphaeroides).